The sequence spans 458 residues: Exodeoxyribonuclease 7 large subunit (458 aa).

The protein belongs to the XseA family. In terms of assembly, heterooligomer composed of large and small subunits.

It is found in the cytoplasm. It carries out the reaction Exonucleolytic cleavage in either 5'- to 3'- or 3'- to 5'-direction to yield nucleoside 5'-phosphates.. Bidirectionally degrades single-stranded DNA into large acid-insoluble oligonucleotides, which are then degraded further into small acid-soluble oligonucleotides. This Escherichia coli O17:K52:H18 (strain UMN026 / ExPEC) protein is Exodeoxyribonuclease 7 large subunit.